The following is a 445-amino-acid chain: Tubulin beta-3 chain (445 aa).

The GTP site is built by glutamine 11, glutamate 69, serine 138, glycine 142, threonine 143, glycine 144, asparagine 204, and asparagine 226. Residue glutamate 69 participates in Mg(2+) binding. Polar residues predominate over residues 417 to 426 (DLVSEYQQYQ). Positions 417–445 (DLVSEYQQYQEASADDEADEFDEEEGDEE) are disordered. Over residues 429-445 (SADDEADEFDEEEGDEE) the composition is skewed to acidic residues.

It belongs to the tubulin family. As to quaternary structure, dimer of alpha and beta chains. A typical microtubule is a hollow water-filled tube with an outer diameter of 25 nm and an inner diameter of 15 nM. Alpha-beta heterodimers associate head-to-tail to form protofilaments running lengthwise along the microtubule wall with the beta-tubulin subunit facing the microtubule plus end conferring a structural polarity. Microtubules usually have 13 protofilaments but different protofilament numbers can be found in some organisms and specialized cells. It depends on Mg(2+) as a cofactor.

Its subcellular location is the cytoplasm. The protein localises to the cytoskeleton. In terms of biological role, tubulin is the major constituent of microtubules, a cylinder consisting of laterally associated linear protofilaments composed of alpha- and beta-tubulin heterodimers. Microtubules grow by the addition of GTP-tubulin dimers to the microtubule end, where a stabilizing cap forms. Below the cap, tubulin dimers are in GDP-bound state, owing to GTPase activity of alpha-tubulin. This Oomycete-like sp. (strain MacKay2000) protein is Tubulin beta-3 chain (TUBB3).